The sequence spans 397 residues: Purine nucleoside transport protein NupG (397 aa).

The next 11 membrane-spanning stretches (helical) occupy residues 1-21, 32-52, 62-82, 97-117, 133-153, 165-185, 187-207, 242-262, 282-302, 335-355, and 377-397; these read MYFLLNLVGLIVIMAVVFLCS, IITLIVLELLITWFMLGTKVG, FFTWLIACASDGIAFAFPSVM, IIFIVTFFDILTYFGILPWLI, LESFFSIQMMFLGNTEALAVI, LLTFGLMSMSSISGSIIGSYL, MVPATYVFTAIPLNCLNALII, MLVGMNMVIVILAMVIGYVAL, IFAYLFSPFAFLLGLPVHDAM, VAVATTFLTSFANFSTVGMIY, and LLVSGIAVSLLSAAIVGLFVW.

It belongs to the concentrative nucleoside transporter (CNT) (TC 2.A.41) family.

It is found in the cell membrane. In terms of biological role, involved in the uptake of the purine ribonucleosides inosine and guanosine. The sequence is that of Purine nucleoside transport protein NupG (nupG) from Bacillus subtilis (strain 168).